Here is a 147-residue protein sequence, read N- to C-terminus: Siroheme decarboxylase NirG subunit (147 aa).

Belongs to the Ahb/Nir family. As to quaternary structure, probably forms a complex composed of NirD, NirL, NirG and NirH. All proteins are required for the total conversion of siroheme to didecarboxysiroheme.

The enzyme catalyses siroheme + 2 H(+) = 12,18-didecarboxysiroheme + 2 CO2. It participates in porphyrin-containing compound metabolism. In terms of biological role, involved in heme d1 biosynthesis. Catalyzes the decarboxylation of siroheme into didecarboxysiroheme. This chain is Siroheme decarboxylase NirG subunit, found in Pseudomonas aeruginosa (strain ATCC 15692 / DSM 22644 / CIP 104116 / JCM 14847 / LMG 12228 / 1C / PRS 101 / PAO1).